The chain runs to 344 residues: MEFSQLVERLQTHIQCHSLEKFGDRNPTLGGVAALTEALTGQISYVDSAKYAPQMKTTQASALILPPDAKLQAEADAQGIAWCATAQPRLLFAAAIAVFYQPYRPPAGIHATAVIDPSVHCGEDVSIGPHVVIYPNVTLGDRVCIHGNVVIYPGVTIGNDSVLHGNCTIHERTQIGQGCVIHSGAAIGAEGFGFVPTPEGWFKMEQSGQVVLEDGVEIGCNSAVDRPAVGETRIGKNTKLDNMVHVAHGCRIGEACALAGQVGLAGGVTIGNRVILAGQVGVADKSEIGDGAIASAQTGIHGKVGPKEVVCGSPHMPHKLYLKASAIYKRLPEMYDTLKKLKKV.

His-248 acts as the Proton acceptor in catalysis.

Belongs to the transferase hexapeptide repeat family. LpxD subfamily. Homotrimer.

The catalysed reaction is a UDP-3-O-[(3R)-3-hydroxyacyl]-alpha-D-glucosamine + a (3R)-hydroxyacyl-[ACP] = a UDP-2-N,3-O-bis[(3R)-3-hydroxyacyl]-alpha-D-glucosamine + holo-[ACP] + H(+). The protein operates within bacterial outer membrane biogenesis; LPS lipid A biosynthesis. Catalyzes the N-acylation of UDP-3-O-acylglucosamine using 3-hydroxyacyl-ACP as the acyl donor. Is involved in the biosynthesis of lipid A, a phosphorylated glycolipid that anchors the lipopolysaccharide to the outer membrane of the cell. This chain is UDP-3-O-acylglucosamine N-acyltransferase, found in Synechocystis sp. (strain ATCC 27184 / PCC 6803 / Kazusa).